We begin with the raw amino-acid sequence, 326 residues long: Chain length determinant protein (326 aa).

The Cytoplasmic portion of the chain corresponds to 1–31; the sequence is MRVENNNVSGQNHDPEQIDLIDLLVQLWRGK. The chain crosses the membrane as a helical span at residues 32 to 52; it reads MTIIISVIVAIALAIGYLAVA. The Periplasmic portion of the chain corresponds to 53-295; it reads KEKWTSTAII…LPIRRDSPKK (243 aa). The chain crosses the membrane as a helical span at residues 296-316; that stretch reads AITLILAVLLGGMVGAGIVLG. At 317 to 326 the chain is on the cytoplasmic side; it reads RNALRNYNAK.

Belongs to the WzzB/Cld/Rol family. In terms of assembly, homodimer.

The protein resides in the cell inner membrane. It functions in the pathway bacterial outer membrane biogenesis; lipopolysaccharide biosynthesis. Confers a modal distribution of chain length on the O-antigen component of lipopolysaccharide (LPS). Gives rise to a reduced number of short chain molecules and increases in numbers of longer molecules. In Escherichia coli (strain K12), this protein is Chain length determinant protein (wzzB).